A 228-amino-acid polypeptide reads, in one-letter code: Core-capsid bridging protein (228 aa).

Residues 146 to 177 (ARPPAARISPPRRRRRRRRSPRPRATAAYRSS) are disordered. Basic residues predominate over residues 155 to 167 (PPRRRRRRRRSPR). The segment covering 168-177 (PRATAAYRSS) has biased composition (low complexity).

The protein belongs to the adenoviridae core-capsid bridging protein family. Monomer. Homodimer. Exists in equilibrium between monomers and dimers in solution. Interacts with the histone-like nucleoprotein; this interactions bridge the virus core to the capsid. Interacts with core protein X; this interactions bridge the virus core to the capsid. Interacts with the endosome lysis protein VI; this interactions bridge the virus core to the capsid. Interacts with the peripentonal hexons. Interacts with host NPM1; this interaction might play a role in virus assembly.

The protein resides in the virion. Its subcellular location is the host nucleus. It is found in the host nucleolus. In terms of biological role, associates loosely with the viral DNA to form an outer shell around the nucleoprotein-DNA complex and links it with the capsid by binding the endosome lysis protein. Dissociates from the viral genome during entry. Might be involved in nuclear capsid assembly of the viral particles through its association with NPM1/nucleophosmin. The chain is Core-capsid bridging protein from Murine adenovirus A serotype 1 (MAdV-1).